Here is a 323-residue protein sequence, read N- to C-terminus: Glyoxylate/hydroxypyruvate reductase B (323 aa).

Residues Arg-237 and Glu-266 contribute to the active site. His-285 functions as the Proton donor in the catalytic mechanism.

It belongs to the D-isomer specific 2-hydroxyacid dehydrogenase family. GhrB subfamily. As to quaternary structure, homodimer.

The protein resides in the cytoplasm. The enzyme catalyses glycolate + NADP(+) = glyoxylate + NADPH + H(+). It catalyses the reaction (R)-glycerate + NAD(+) = 3-hydroxypyruvate + NADH + H(+). It carries out the reaction (R)-glycerate + NADP(+) = 3-hydroxypyruvate + NADPH + H(+). Its function is as follows. Catalyzes the NADPH-dependent reduction of glyoxylate and hydroxypyruvate into glycolate and glycerate, respectively. The protein is Glyoxylate/hydroxypyruvate reductase B of Klebsiella pneumoniae subsp. pneumoniae (strain ATCC 700721 / MGH 78578).